The following is a 296-amino-acid chain: Nucleotide-binding protein ABC3036 (296 aa).

13–20 serves as a coordination point for ATP; that stretch reads GMSGAGKS. Residue 64 to 67 coordinates GTP; that stretch reads DLRG.

The protein belongs to the RapZ-like family.

Functionally, displays ATPase and GTPase activities. In Shouchella clausii (strain KSM-K16) (Alkalihalobacillus clausii), this protein is Nucleotide-binding protein ABC3036.